A 118-amino-acid polypeptide reads, in one-letter code: Large ribosomal subunit protein uL18 (118 aa).

It belongs to the universal ribosomal protein uL18 family. In terms of assembly, part of the 50S ribosomal subunit; part of the 5S rRNA/L5/L18/L25 subcomplex. Contacts the 5S and 23S rRNAs.

In terms of biological role, this is one of the proteins that bind and probably mediate the attachment of the 5S RNA into the large ribosomal subunit, where it forms part of the central protuberance. This Phenylobacterium zucineum (strain HLK1) protein is Large ribosomal subunit protein uL18.